A 392-amino-acid polypeptide reads, in one-letter code: Immunoglobulin-binding protein EibA (392 aa).

The signal sequence occupies residues 1 to 27 (MSKKFTKAVLSAAMAGVLFGVSFDIMA). Residues 28–301 (AEQSYSALNA…IAANTRTLQQ (274 aa)) are surface exposed passenger domain. The Extracellular portion of the chain corresponds to 28–341 (AEQSYSALNA…GLFQPYSVGK (314 aa)). Residues 174-215 (ESANSTIVANELEAQKGKLDAQKGELEAQKKNLGELTTRTDK) adopt a coiled-coil conformation. The interval 187–230 (AQKGKLDAQKGELEAQKKNLGELTTRTDKIDAAAAATAAKVESR) is right-handed coiled-coil (RHcc). The segment at 231–256 (TLVGVSSDGTLTRAEGAKNTISVNDG) is saddle domain. Residues 257-322 (LVALSGRTDR…INENHKEMKR (66 aa)) form a left-handed coiled-coil (LHcc) region. The tract at residues 299-341 (LQQHSARLDSQQRQINENHKEMKRAAAQSAALTGLFQPYSVGK) is outer membrane translocation of the passenger domain. The next 4 membrane-spanning stretches (beta stranded) occupy residues 342–352 (FNASAAVGGYS), 355–366 (QALAVGVGYRFN), 369–378 (TAAKAGVAFS), and 382–392 (ASWNVGVNFEF). The interval 342–392 (FNASAAVGGYSDEQALAVGVGYRFNEQTAAKAGVAFSDGDASWNVGVNFEF) is translocator domain.

The protein belongs to the autotransporter-2 (AT-2) (TC 1.B.40) family. Eib subfamily. As to quaternary structure, homotrimer; can probably form mixed heterotrimers in vivo. Will form mixed heterotrimers with EibD; these are correctly located in the outer membrane and bind IgG Fc, although less well than homotrimers. Does not form trimers with distantly related YadA from Y.enterocolitica; coexpression was lethal and one of the genes is eliminated in vivo. If the full translocator domain (299-392) is exchanged with that of YadA ('368-455'), will form heterotrimers with YadA and vice-versa. In denaturing gels runs as 2 bands of about 121 and 131 kDa; extracting the sample with 88% phenol at 70 degrees Celsius reduces part of the signal to about 45 kDa. Binds the Fc portion of IgG; binds more than 1 Fc per subunit.

The protein localises to the cell surface. It localises to the cell outer membrane. Its function is as follows. Binds (in a non-immune fashion) to the Fc portion of human IgG but not IgA; binding occurs on the cell surface. Confers the ability to survive exposure to human serum exposure. Binds to the Fc portion of human IgG and to whole mouse antibodies also via Fc, binds more than 1 Fc or IgG. The polypeptide is Immunoglobulin-binding protein EibA (Escherichia coli).